The sequence spans 485 residues: ATP-dependent 6-phosphofructokinase 7 (485 aa).

ATP contacts are provided by residues Gly101, 164–165, and 189–192; these read RG and GDGT. Asp190 serves as a coordination point for Mg(2+). Substrate contacts are provided by residues 218–220, 263–265, Glu319, and 374–377; these read TID, MGR, and YMIR. Asp220 serves as the catalytic Proton acceptor. Residues 449–485 are disordered; that stretch reads SFLGPKDTSEEKKELPETPLLDDGAVDIPPVTKEVTK. Positions 455–464 are enriched in basic and acidic residues; that stretch reads DTSEEKKELP.

This sequence belongs to the phosphofructokinase type A (PFKA) family. PPi-dependent PFK group II subfamily. Atypical ATP-dependent clade 'X' sub-subfamily. Homotetramer. Mg(2+) is required as a cofactor. As to expression, expressed in roots, leaves, stems and flowers.

The protein resides in the cytoplasm. It catalyses the reaction beta-D-fructose 6-phosphate + ATP = beta-D-fructose 1,6-bisphosphate + ADP + H(+). The protein operates within carbohydrate degradation; glycolysis; D-glyceraldehyde 3-phosphate and glycerone phosphate from D-glucose: step 3/4. Its activity is regulated as follows. Allosterically activated by AMP. Functionally, catalyzes the phosphorylation of D-fructose 6-phosphate to fructose 1,6-bisphosphate by ATP, the first committing step of glycolysis. The sequence is that of ATP-dependent 6-phosphofructokinase 7 from Arabidopsis thaliana (Mouse-ear cress).